Reading from the N-terminus, the 312-residue chain is uncharacterized protein (312 aa).

The interval 95-119 (EKRRENPPKLTLPPLPPPAEERKKP) is disordered.

The protein resides in the plastid. Its subcellular location is the chloroplast. This is an uncharacterized protein from Chlamydomonas moewusii (Chlamydomonas eugametos).